The following is a 510-amino-acid chain: JmjC domain-containing histone demethylation protein 1 (510 aa).

A PHD-type zinc finger spans residues 2 to 53; the sequence is PNRCDFCTSSSTKDKQQWTQCDGCDRWVHDVCVSITDPVSYAKYHCPTCTKT. A JmjC domain is found at 216-365; that stretch reads TLVRELDLVD…TQIDIAGIEV (150 aa). T255 is a substrate binding site. H258 and D260 together coordinate Fe cation. Residue K275 coordinates substrate. Residue H333 coordinates Fe cation. The disordered stretch occupies residues 475–510; the sequence is KGESKEKHKIESQLPEEKILQGSKLESKEEVQTENF. Over residues 477–510 the composition is skewed to basic and acidic residues; it reads ESKEKHKIESQLPEEKILQGSKLESKEEVQTENF.

Belongs to the JHDM1 histone demethylase family. The cofactor is Fe(2+).

It localises to the nucleus. It catalyses the reaction N(6),N(6)-dimethyl-L-lysyl(36)-[histone H3] + 2 2-oxoglutarate + 2 O2 = L-lysyl(36)-[histone H3] + 2 formaldehyde + 2 succinate + 2 CO2. Histone demethylase that specifically demethylates 'Lys-36' of histone H3, thereby playing a central role in histone code. The chain is JmjC domain-containing histone demethylation protein 1 (JHD1) from Yarrowia lipolytica (strain CLIB 122 / E 150) (Yeast).